The following is a 189-amino-acid chain: Pyridoxal 5'-phosphate synthase subunit PdxT (189 aa).

Residue 47-49 coordinates L-glutamine; it reads GES. Catalysis depends on Cys79, which acts as the Nucleophile. L-glutamine-binding positions include Arg106 and 135–136; that span reads IR. Catalysis depends on charge relay system residues His171 and Glu173.

It belongs to the glutaminase PdxT/SNO family. As to quaternary structure, in the presence of PdxS, forms a dodecamer of heterodimers. Only shows activity in the heterodimer.

It catalyses the reaction aldehydo-D-ribose 5-phosphate + D-glyceraldehyde 3-phosphate + L-glutamine = pyridoxal 5'-phosphate + L-glutamate + phosphate + 3 H2O + H(+). The enzyme catalyses L-glutamine + H2O = L-glutamate + NH4(+). The protein operates within cofactor biosynthesis; pyridoxal 5'-phosphate biosynthesis. Catalyzes the hydrolysis of glutamine to glutamate and ammonia as part of the biosynthesis of pyridoxal 5'-phosphate. The resulting ammonia molecule is channeled to the active site of PdxS. This Thermoanaerobacter pseudethanolicus (strain ATCC 33223 / 39E) (Clostridium thermohydrosulfuricum) protein is Pyridoxal 5'-phosphate synthase subunit PdxT.